Reading from the N-terminus, the 66-residue chain is Large ribosomal subunit protein bL35 (66 aa).

This sequence belongs to the bacterial ribosomal protein bL35 family.

This Borrelia garinii subsp. bavariensis (strain ATCC BAA-2496 / DSM 23469 / PBi) (Borreliella bavariensis) protein is Large ribosomal subunit protein bL35.